The primary structure comprises 182 residues: Large ribosomal subunit protein uL5c (182 aa).

This sequence belongs to the universal ribosomal protein uL5 family. As to quaternary structure, part of the 50S ribosomal subunit; contacts the 5S rRNA.

The protein resides in the plastid. It is found in the chloroplast. Binds 5S rRNA, forms part of the central protuberance of the 50S subunit. In Cyanidium caldarium (Red alga), this protein is Large ribosomal subunit protein uL5c (rpl5).